The sequence spans 324 residues: MKRNIAIVAGGDTSEIVVSLRSAQGIYSFIDKEKYNLYIVEMEGRRWEVQLPDGSKTPVDRNDFSFINGAEKVVFDFAYITIHGTPGEDGRLQGYFDMMRIPYSCCGVLAAAITYDKFVCNQYLKAFGVRISESLLLRQGQAVSDEDVVEKIGLPCFIKPNLGGSSFGVTKVKTREQIQPAIAKAFSEAEEVMIEAFMGGTELTCGCYKTKEKSVVFPLTEVVTHNEFFDYDAKYNGQVDEITPARISEELTRRVQTLTSAIYDILGCSGIIRVDYIITEGEKINLLEVNTTPGMTATSFIPQQVRAAGLDIKDVMTDIIENKF.

An ATP-grasp domain is found at 121–321 (NQYLKAFGVR…IKDVMTDIIE (201 aa)). 149-204 (VEKIGLPCFIKPNLGGSSFGVTKVKTREQIQPAIAKAFSEAEEVMIEAFMGGTELT) is a binding site for ATP. Mg(2+)-binding residues include Asp275, Glu288, and Asn290.

Belongs to the D-alanine--D-alanine ligase family. It depends on Mg(2+) as a cofactor. Requires Mn(2+) as cofactor.

It is found in the cytoplasm. It carries out the reaction 2 D-alanine + ATP = D-alanyl-D-alanine + ADP + phosphate + H(+). The protein operates within cell wall biogenesis; peptidoglycan biosynthesis. Its function is as follows. Cell wall formation. In Bacteroides fragilis (strain YCH46), this protein is D-alanine--D-alanine ligase.